A 74-amino-acid chain; its full sequence is Small ribosomal subunit protein bS18 (74 aa).

Belongs to the bacterial ribosomal protein bS18 family. Part of the 30S ribosomal subunit. Forms a tight heterodimer with protein bS6.

Its function is as follows. Binds as a heterodimer with protein bS6 to the central domain of the 16S rRNA, where it helps stabilize the platform of the 30S subunit. This is Small ribosomal subunit protein bS18 from Chlorobaculum tepidum (strain ATCC 49652 / DSM 12025 / NBRC 103806 / TLS) (Chlorobium tepidum).